A 354-amino-acid chain; its full sequence is Replication factor C subunit 3 (354 aa).

41-48 serves as a coordination point for ATP; that stretch reads GPSGSGKK.

It belongs to the activator 1 small subunits family. In terms of assembly, heterotetramer of subunits RFC2, RFC3, RFC4 and RFC5 that can form a complex with RFC1.

Its subcellular location is the nucleus. In terms of biological role, may be involved in DNA replication and thus regulate cell proliferation. The chain is Replication factor C subunit 3 (RFC3) from Arabidopsis thaliana (Mouse-ear cress).